Reading from the N-terminus, the 341-residue chain is Phosphate acyltransferase (341 aa).

The protein belongs to the PlsX family. As to quaternary structure, homodimer. Probably interacts with PlsY.

The protein localises to the cytoplasm. The enzyme catalyses a fatty acyl-[ACP] + phosphate = an acyl phosphate + holo-[ACP]. It participates in lipid metabolism; phospholipid metabolism. Functionally, catalyzes the reversible formation of acyl-phosphate (acyl-PO(4)) from acyl-[acyl-carrier-protein] (acyl-ACP). This enzyme utilizes acyl-ACP as fatty acyl donor, but not acyl-CoA. This chain is Phosphate acyltransferase, found in Lacticaseibacillus casei (strain BL23) (Lactobacillus casei).